A 490-amino-acid polypeptide reads, in one-letter code: Betaine aldehyde dehydrogenase (490 aa).

2 residues coordinate K(+): Ile27 and Asp93. 150–152 (GAW) provides a ligand contact to NAD(+). Lys162 acts as the Charge relay system in catalysis. 176–179 (KPSE) contributes to the NAD(+) binding site. Val180 provides a ligand contact to K(+). 230–233 (GTDT) is an NAD(+) binding site. Residue Leu246 coordinates K(+). Glu252 functions as the Proton acceptor in the catalytic mechanism. Positions 254, 286, and 387 each coordinate NAD(+). The active-site Nucleophile is the Cys286. A Cysteine sulfenic acid (-SOH) modification is found at Cys286. Residues Lys457 and Gly460 each coordinate K(+). Glu464 serves as the catalytic Charge relay system.

It belongs to the aldehyde dehydrogenase family. In terms of assembly, dimer of dimers. Requires K(+) as cofactor.

The enzyme catalyses betaine aldehyde + NAD(+) + H2O = glycine betaine + NADH + 2 H(+). Its pathway is amine and polyamine biosynthesis; betaine biosynthesis via choline pathway; betaine from betaine aldehyde: step 1/1. Functionally, involved in the biosynthesis of the osmoprotectant glycine betaine. Catalyzes the irreversible oxidation of betaine aldehyde to the corresponding acid. This Pseudomonas syringae pv. syringae (strain B728a) protein is Betaine aldehyde dehydrogenase.